A 588-amino-acid polypeptide reads, in one-letter code: Sulfite reductase [NADPH] hemoprotein beta-component (588 aa).

Residues 1–10 (MSDKKQKGLE) show a composition bias toward basic and acidic residues. Residues 1 to 20 (MSDKKQKGLEWQDNPLSDNE) are disordered. [4Fe-4S] cluster is bound by residues C443, C449, C488, and C492. C492 lines the siroheme pocket.

The protein belongs to the nitrite and sulfite reductase 4Fe-4S domain family. Alpha(8)-beta(8). The alpha component is a flavoprotein, the beta component is a hemoprotein. Requires siroheme as cofactor. [4Fe-4S] cluster serves as cofactor.

The enzyme catalyses hydrogen sulfide + 3 NADP(+) + 3 H2O = sulfite + 3 NADPH + 4 H(+). The protein operates within sulfur metabolism; hydrogen sulfide biosynthesis; hydrogen sulfide from sulfite (NADPH route): step 1/1. Its function is as follows. Component of the sulfite reductase complex that catalyzes the 6-electron reduction of sulfite to sulfide. This is one of several activities required for the biosynthesis of L-cysteine from sulfate. This chain is Sulfite reductase [NADPH] hemoprotein beta-component, found in Mannheimia succiniciproducens (strain KCTC 0769BP / MBEL55E).